The primary structure comprises 254 residues: MSVLSGLNTKVVKNGDPAPAPPASGTIRIYNMRYCPWAQRALIFASLKKIPTEVINIHLDQKPDWFFTKHYKGQVPALEHDEGKKIVIESAVIPEYLDDIYPEPRIIPTDHYEKVQQKLLLDRISGQLSSAFYGVVQAAKISDLLKEKLVELAKAYDTAEELLTGDFYSGTSKPGFVDYLIYPNIQRAFWTSHIIKDFPLKVESFPGPNYPKLSKWYKRLDSIPEVIATSQPTETAVEFFKSWIIGAPNFDYGL.

In terms of domain architecture, GST N-terminal spans 25 to 105; that stretch reads GTIRIYNMRY…YLDDIYPEPR (81 aa). Cysteine 35 serves as the catalytic Nucleophile. Glutathione is bound by residues lysine 62, valine 75, and 89–90; that span reads ES. The GST C-terminal domain occupies 110–239; the sequence is DHYEKVQQKL…SQPTETAVEF (130 aa).

Belongs to the GST superfamily. Omega family.

The catalysed reaction is RX + glutathione = an S-substituted glutathione + a halide anion + H(+). It carries out the reaction L-dehydroascorbate + 2 glutathione = glutathione disulfide + L-ascorbate. The enzyme catalyses methylarsonate + 2 glutathione + H(+) = methylarsonous acid + glutathione disulfide + H2O. Functionally, exhibits glutathione-dependent thiol transferase activity. Has dehydroascorbate reductase activity and may contribute to the recycling of ascorbic acid. Participates in the biotransformation of inorganic arsenic and reduces monomethylarsonic acid (MMA). This is Probable glutathione transferase omega-2 (gsto-2) from Caenorhabditis elegans.